The chain runs to 710 residues: Cyclin-dependent kinase G-2 (710 aa).

Residues 1–350 (MAAGRHGGYR…ETPEPVKPPH (350 aa)) are disordered. Over residues 8–30 (GYRDYEARERELDAEASRRSKEQ) the composition is skewed to basic and acidic residues. Positions 31–40 (QHHHHPSGRH) are enriched in basic residues. Residues 41 to 64 (QRGDSDPRCEADRRRDGGRSRGGR) show a composition bias toward basic and acidic residues. Residues 124–133 (SVVAASASSP) are compositionally biased toward low complexity. Basic and acidic residues predominate over residues 144–163 (WDRDSPKPMHSDVAKGKKAV). Positions 170-182 (LPLPPPPPLPPQD) are enriched in pro residues. Composition is skewed to basic and acidic residues over residues 183 to 195 (HIPERLAVEKSPM) and 209 to 218 (LQEHAESRVM). Over residues 299 to 308 (DENEDLEVDK) the composition is skewed to acidic residues. The span at 335–344 (YEVRRSETPE) shows a compositional bias: basic and acidic residues. One can recognise a Protein kinase domain in the interval 365 to 656 (FERLNKINEG…ADAALQHEWF (292 aa)). ATP contacts are provided by residues 371 to 379 (INEGTYGVV) and K394. T375 carries the phosphothreonine modification. Y376 is subject to Phosphotyrosine. Catalysis depends on D489, which acts as the Proton acceptor. A Phosphoserine modification is found at S516. T522 is subject to Phosphothreonine.

It belongs to the protein kinase superfamily. CMGC Ser/Thr protein kinase family. CDC2/CDKX subfamily.

It carries out the reaction L-seryl-[protein] + ATP = O-phospho-L-seryl-[protein] + ADP + H(+). The enzyme catalyses L-threonyl-[protein] + ATP = O-phospho-L-threonyl-[protein] + ADP + H(+). The catalysed reaction is [DNA-directed RNA polymerase] + ATP = phospho-[DNA-directed RNA polymerase] + ADP + H(+). This chain is Cyclin-dependent kinase G-2 (CDKG-2), found in Oryza sativa subsp. indica (Rice).